We begin with the raw amino-acid sequence, 363 residues long: MGNIHIQTKSKEYDVYVGKESLSHLTTIVQNMQPSVSNIMIISDEAVASLHLQTVVDALQIDQKVFSFVVPSGEKEKSFENFYAAHTSALENKLDRNSLIVALGGGMIGDLAGFVAASFMRGIRFVQVPTTLLAHDSAVGGKVAINHPLGKNMIGAFHQPEAVVYHTPFLQSLPEKEWRSGYAEVIKHALIGDVKLYHWLKEEVQTLADLRDEKLIHILTKAIPVKANIVAQDETEKGVRAHLNFGHTLGHALEKELGYGNITHGDGVAVGMLFAIFLSEQVYKVNLAYEEMKQWFLKYGYPKMPSDLSVERLVGLMKQDKKANAGTIHMVLMQEYGVVNVVSIPDETVHIALEAFQKDMVEK.

Residues 72–77 (SGEKEK), 130–131 (TT), Lys-142, and Lys-151 contribute to the NAD(+) site. The Zn(2+) site is built by Glu-184, His-247, and His-264.

This sequence belongs to the sugar phosphate cyclases superfamily. Dehydroquinate synthase family. The cofactor is Co(2+). It depends on Zn(2+) as a cofactor. NAD(+) is required as a cofactor.

The protein resides in the cytoplasm. It catalyses the reaction 7-phospho-2-dehydro-3-deoxy-D-arabino-heptonate = 3-dehydroquinate + phosphate. It participates in metabolic intermediate biosynthesis; chorismate biosynthesis; chorismate from D-erythrose 4-phosphate and phosphoenolpyruvate: step 2/7. Functionally, catalyzes the conversion of 3-deoxy-D-arabino-heptulosonate 7-phosphate (DAHP) to dehydroquinate (DHQ). The protein is 3-dehydroquinate synthase of Bacillus thuringiensis (strain Al Hakam).